The sequence spans 356 residues: Probable cytosolic iron-sulfur protein assembly protein 1 (356 aa).

WD repeat units follow at residues 34-73, 89-128, 134-173, 179-218, 244-291, and 319-356; these read GHKRTVRSVAWSPNGEVLATASFDSTVGLWERIPENIRAE, GHDSECKSVAFSYNGNLLASCGRDKSVWVWEAQPDADYEC, EHSQDVKCVIWHPKEEILASASYDNTIKMYVDDPSCDWYC, AHSSTVWSLSFSPCGQFLASSSDDMTIWIWRRVSAAECVE, HFSG…ATLR, and AHGSVDVNCVKWAPMNTDGSAPTMIASAGDDGEIRIWT.

Belongs to the WD repeat CIA1 family.

Its function is as follows. Essential component of the cytosolic iron-sulfur (Fe/S) protein assembly machinery. Required for the maturation of extramitochondrial Fe/S proteins. This is Probable cytosolic iron-sulfur protein assembly protein 1 from Malassezia globosa (strain ATCC MYA-4612 / CBS 7966) (Dandruff-associated fungus).